The chain runs to 134 residues: uncharacterized protein (134 aa).

This is an uncharacterized protein from Synechococcus elongatus (strain ATCC 33912 / PCC 7942 / FACHB-805) (Anacystis nidulans R2).